The chain runs to 55 residues: UPF0434 protein BPEN_388 (55 aa).

It belongs to the UPF0434 family.

This is UPF0434 protein BPEN_388 from Blochmanniella pennsylvanica (strain BPEN).